A 396-amino-acid chain; its full sequence is MAKEKFERSKPHVNVGTIGHVDHGKTTLTAAITKVLAQKGGAQFLAYDQIDKAPEERERGITIATAHVEYQTEKRHYAHVDCPGHADYVKNMITGAAQMDGAILVVSAADGPMPQTREHILLARQVGVPYIVVFLNKVDMVDDKELLDLVELEVRELLSEYDFPGNEIPIVKGSALKALEGDKGELGEQAIFKLMEAVDAYIPTPQRATDKPFLMPVEDVFSISGRGTVATGRVERGIVKVGEEVEVVGLKATAKTVVTGVEMFRKLLDEGRAGDNIGALLRGLKREEVERGQVLAKPGSITPHTKFKAEVYVLTKEEGGRHTPFFNGYRPQFYFRTTDVTGSVQLPQGVEMVMPGDNIGMEVELITPIAMEKELRFAIREGGRTVGAGVVAEVIQ.

Positions 10–206 (KPHVNVGTIG…AVDAYIPTPQ (197 aa)) constitute a tr-type G domain. A G1 region spans residues 19–26 (GHVDHGKT). 19-26 (GHVDHGKT) is a binding site for GTP. Mg(2+) is bound at residue T26. The segment at 60–64 (GITIA) is G2. Residues 81 to 84 (DCPG) form a G3 region. Residues 81–85 (DCPGH) and 136–139 (NKVD) contribute to the GTP site. Residues 136 to 139 (NKVD) form a G4 region. Residues 174–176 (SAL) are G5.

This sequence belongs to the TRAFAC class translation factor GTPase superfamily. Classic translation factor GTPase family. EF-Tu/EF-1A subfamily. Monomer.

The protein localises to the cytoplasm. It catalyses the reaction GTP + H2O = GDP + phosphate + H(+). Functionally, GTP hydrolase that promotes the GTP-dependent binding of aminoacyl-tRNA to the A-site of ribosomes during protein biosynthesis. This Anaeromyxobacter dehalogenans (strain 2CP-C) protein is Elongation factor Tu.